A 215-amino-acid chain; its full sequence is uncharacterized protein (215 aa).

A disordered region spans residues 120 to 147 (HRAPQGTSSYQEGRRAHEATSAESDDDN).

This is an uncharacterized protein from Homo sapiens (Human).